The following is a 208-amino-acid chain: Small ribosomal subunit protein uS4 (208 aa).

Positions 98 to 161 constitute an S4 RNA-binding domain; the sequence is RRLDNVVYRM…KSNPQVVRAM (64 aa).

This sequence belongs to the universal ribosomal protein uS4 family. As to quaternary structure, part of the 30S ribosomal subunit. Contacts protein S5. The interaction surface between S4 and S5 is involved in control of translational fidelity.

One of the primary rRNA binding proteins, it binds directly to 16S rRNA where it nucleates assembly of the body of the 30S subunit. Functionally, with S5 and S12 plays an important role in translational accuracy. The protein is Small ribosomal subunit protein uS4 of Helicobacter acinonychis (strain Sheeba).